Consider the following 777-residue polypeptide: 1,4-alpha-glucan branching enzyme GlgB (777 aa).

Asp408 serves as the catalytic Nucleophile. The Proton donor role is filled by Glu461.

The protein belongs to the glycosyl hydrolase 13 family. GlgB subfamily. As to quaternary structure, monomer.

It catalyses the reaction Transfers a segment of a (1-&gt;4)-alpha-D-glucan chain to a primary hydroxy group in a similar glucan chain.. Its pathway is glycan biosynthesis; glycogen biosynthesis. In terms of biological role, catalyzes the formation of the alpha-1,6-glucosidic linkages in glycogen by scission of a 1,4-alpha-linked oligosaccharide from growing alpha-1,4-glucan chains and the subsequent attachment of the oligosaccharide to the alpha-1,6 position. This Actinobacillus pleuropneumoniae serotype 5b (strain L20) protein is 1,4-alpha-glucan branching enzyme GlgB.